The chain runs to 540 residues: DM7 family protein GD24576 (540 aa).

A disordered region spans residues 416-443; it reads ATDTRGRDEIRTSCDQSQEKDEGSAEAD. A compositionally biased stretch (basic and acidic residues) spans 417–443; the sequence is TDTRGRDEIRTSCDQSQEKDEGSAEAD.

The protein belongs to the DM7 family.

The protein is DM7 family protein GD24576 of Drosophila simulans (Fruit fly).